A 514-amino-acid chain; its full sequence is 2-isopropylmalate synthase (514 aa).

Residues 5–268 form the Pyruvate carboxyltransferase domain; the sequence is LIIFDTTLRD…DVGIDTSQIV (264 aa). Residues Asp-14, His-202, His-204, and Asn-239 each coordinate Mn(2+). The segment at 395–514 is regulatory domain; that stretch reads KFVSLSQRSE…KDDKVNPQRS (120 aa).

It belongs to the alpha-IPM synthase/homocitrate synthase family. LeuA type 1 subfamily. In terms of assembly, homodimer. It depends on Mn(2+) as a cofactor.

The protein localises to the cytoplasm. It carries out the reaction 3-methyl-2-oxobutanoate + acetyl-CoA + H2O = (2S)-2-isopropylmalate + CoA + H(+). It functions in the pathway amino-acid biosynthesis; L-leucine biosynthesis; L-leucine from 3-methyl-2-oxobutanoate: step 1/4. In terms of biological role, catalyzes the condensation of the acetyl group of acetyl-CoA with 3-methyl-2-oxobutanoate (2-ketoisovalerate) to form 3-carboxy-3-hydroxy-4-methylpentanoate (2-isopropylmalate). The protein is 2-isopropylmalate synthase of Burkholderia cenocepacia (strain ATCC BAA-245 / DSM 16553 / LMG 16656 / NCTC 13227 / J2315 / CF5610) (Burkholderia cepacia (strain J2315)).